We begin with the raw amino-acid sequence, 459 residues long: Ribulose bisphosphate carboxylase large chain (459 aa).

A propeptide spanning residues 1–2 is cleaved from the precursor; the sequence is MS. Pro-3 is modified (N-acetylproline). Lys-14 is modified (N6,N6,N6-trimethyllysine). Positions 123 and 173 each coordinate substrate. The active-site Proton acceptor is the Lys-175. Lys-177 is a binding site for substrate. Positions 201, 203, and 204 each coordinate Mg(2+). Lys-201 bears the N6-carboxylysine mark. Residue His-294 is the Proton acceptor of the active site. Residues Arg-295, His-327, and Ser-379 each coordinate substrate.

This sequence belongs to the RuBisCO large chain family. Type I subfamily. In terms of assembly, heterohexadecamer of 8 large chains and 8 small chains; disulfide-linked. The disulfide link is formed within the large subunit homodimers. It depends on Mg(2+) as a cofactor. The disulfide bond which can form in the large chain dimeric partners within the hexadecamer appears to be associated with oxidative stress and protein turnover.

Its subcellular location is the plastid. It is found in the chloroplast. It carries out the reaction 2 (2R)-3-phosphoglycerate + 2 H(+) = D-ribulose 1,5-bisphosphate + CO2 + H2O. The catalysed reaction is D-ribulose 1,5-bisphosphate + O2 = 2-phosphoglycolate + (2R)-3-phosphoglycerate + 2 H(+). In terms of biological role, ruBisCO catalyzes two reactions: the carboxylation of D-ribulose 1,5-bisphosphate, the primary event in carbon dioxide fixation, as well as the oxidative fragmentation of the pentose substrate in the photorespiration process. Both reactions occur simultaneously and in competition at the same active site. The polypeptide is Ribulose bisphosphate carboxylase large chain (Corynocarpus laevigatus (New Zealand laurel)).